A 264-amino-acid chain; its full sequence is Methylthioribulose-1-phosphate dehydratase (264 aa).

Residue C110 participates in substrate binding. 2 residues coordinate Zn(2+): H128 and H130. E151 (proton donor/acceptor) is an active-site residue. H213 serves as a coordination point for Zn(2+).

Belongs to the aldolase class II family. MtnB subfamily. Requires Zn(2+) as cofactor.

Its subcellular location is the cytoplasm. It catalyses the reaction 5-(methylsulfanyl)-D-ribulose 1-phosphate = 5-methylsulfanyl-2,3-dioxopentyl phosphate + H2O. The protein operates within amino-acid biosynthesis; L-methionine biosynthesis via salvage pathway; L-methionine from S-methyl-5-thio-alpha-D-ribose 1-phosphate: step 2/6. Catalyzes the dehydration of methylthioribulose-1-phosphate (MTRu-1-P) into 2,3-diketo-5-methylthiopentyl-1-phosphate (DK-MTP-1-P). In Vanderwaltozyma polyspora (strain ATCC 22028 / DSM 70294 / BCRC 21397 / CBS 2163 / NBRC 10782 / NRRL Y-8283 / UCD 57-17) (Kluyveromyces polysporus), this protein is Methylthioribulose-1-phosphate dehydratase.